A 341-amino-acid chain; its full sequence is MKILEYDEKTGALRLHVENEDDLWLIHLVLSKGDIVVARTTRDVSMGNDSRRVPMVVELEVEFSEFQPFTSRLRIHGIVRDAPERYGIKGSHHTINLDIGDEIVIIKKWTKGLIDRIRKQAEKNKRVLIVLTDQDELLVALPMEQGIRILTERSLPGVSDEDKSLESVALEVSKEVEQYVKQYSPDAVIIAGPGPFKEIVRDKLKIKPRIYVDNVSSASRAGLNEILRRDIIDEVMRDYQISVASRELERGLSLLAQGSSLVVYGRDEVERASQIGAVETLLVTDDLLTLEDEETRRKTEAIMEAVESKGGKVMIVPKDSPVYLQLKNLTGLLAILRFRIN.

It belongs to the eukaryotic release factor 1 family. Pelota subfamily. As to quaternary structure, monomer. It depends on a divalent metal cation as a cofactor.

The protein localises to the cytoplasm. Functionally, may function in recognizing stalled ribosomes, interact with stem-loop structures in stalled mRNA molecules, and effect endonucleolytic cleavage of the mRNA. May play a role in the release non-functional ribosomes and degradation of damaged mRNAs. Has endoribonuclease activity. The protein is Protein pelota homolog of Metallosphaera sedula (strain ATCC 51363 / DSM 5348 / JCM 9185 / NBRC 15509 / TH2).